Consider the following 420-residue polypeptide: MDVLSVSEINAQIKALLEATFLQVRVQGEVSNLTIHKVSGHAYFSLKDSQSVIRCVLFKGNANRLKFALKEGQEMVVFGGISVYVPRGDYQINCFEIEPKEIGSLTLALEQLKEKLRLKGYFDEANKLPKPHFPKRVAVITSQNSAAWADMKKIASKRWPMCELVCINTLMQGEGCVQSVVESIAYADSLHDTKNAFDAIVVARGGGSMEDLYSFNDEKIADALYLAKTFSMSAIGHESDFLLSDLVADLRASTPSNAMEILLPNSDEWLQKLDGFNVKLHRSFKILLHQKKAYLEHLADFLKRLSFENKHHLNALKLEKLKIALENKTLEFLRFKKTLLEKISTQTLTSPFLQTKTERLNALENALKLAHANLKLPQFGAFLSKNNQAIELEALKRGDKIELSNEKARASAEILSVDRV.

Belongs to the XseA family. Heterooligomer composed of large and small subunits.

Its subcellular location is the cytoplasm. The catalysed reaction is Exonucleolytic cleavage in either 5'- to 3'- or 3'- to 5'-direction to yield nucleoside 5'-phosphates.. In terms of biological role, bidirectionally degrades single-stranded DNA into large acid-insoluble oligonucleotides, which are then degraded further into small acid-soluble oligonucleotides. The protein is Exodeoxyribonuclease 7 large subunit of Helicobacter pylori (strain P12).